We begin with the raw amino-acid sequence, 70 residues long: UPF0270 protein VP2791 (70 aa).

This sequence belongs to the UPF0270 family.

The polypeptide is UPF0270 protein VP2791 (Vibrio parahaemolyticus serotype O3:K6 (strain RIMD 2210633)).